A 310-amino-acid chain; its full sequence is Elongation factor Ts, mitochondrial (310 aa).

A mitochondrion-targeting transit peptide spans 1 to 42 (MGFQVLRSVIQAPLAKRSFLCKSCPSGLRVLYNNILLSSRSY).

This sequence belongs to the EF-Ts family.

Its subcellular location is the mitochondrion. Functionally, associates with the EF-Tu.GDP complex and induces the exchange of GDP to GTP. It remains bound to the aminoacyl-tRNA.EF-Tu.GTP complex up to the GTP hydrolysis stage on the ribosome. The chain is Elongation factor Ts, mitochondrial (tsf1) from Schizosaccharomyces japonicus (strain yFS275 / FY16936) (Fission yeast).